The primary structure comprises 1309 residues: Lysine-specific demethylase 2B (1309 aa).

Ser-26 is modified (phosphoserine). Positions 147-315 (FSHTKLEHLV…MQLRIYEIED (169 aa)) constitute a JmjC domain. Thr-208 provides a ligand contact to substrate. Fe cation-binding residues include His-211 and Asp-213. Lys-228 serves as a coordination point for substrate. His-283 is a Fe cation binding site. Over residues 378–403 (DMEEESCEQQPQEEEEEEEDKEEEGD) the composition is skewed to acidic residues. The segment at 378–476 (DMEEESCEQQ…PTGSPATEVS (99 aa)) is disordered. The segment covering 404 to 413 (GADKTPKPPT) has biased composition (basic and acidic residues). Positions 415 to 424 (DPTSPTSTPP) are enriched in low complexity. A phosphoserine mark is found at Ser-447 and Ser-450. Phosphothreonine is present on Thr-466. The segment covering 467–476 (PTGSPATEVS) has biased composition (polar residues). Residue Ser-470 is modified to Phosphoserine. A CXXC-type zinc finger spans residues 579–625 (ARRRRTRCRKCEACLRTECGECHFCKDMKKFGGPGRMKQSCIMRQCI). The Zn(2+) site is built by Cys-586, Cys-589, Cys-592, Cys-597, Cys-600, Cys-603, Cys-619, Cys-624, Cys-635, Cys-638, Cys-661, Cys-664, His-669, Cys-672, Cys-692, and Cys-695. A PHD-type zinc finger spans residues 632–698 (TAVCLVCGEA…CWECPKCNHA (67 aa)). 2 disordered regions span residues 700–816 (KTGK…SLSP) and 828–1005 (QLKP…SASP). The span at 722 to 772 (KEQKMNRDNKEGQEPAKRRSECEEAPRRRSDEHPKKVPADGILRRKSDDVH) shows a compositional bias: basic and acidic residues. Over residues 792-816 (SSLQTSPGSSSHLSPRPPLGSSLSP) the composition is skewed to low complexity. Glycyl lysine isopeptide (Lys-Gly) (interchain with G-Cter in SUMO2) cross-links involve residues Lys-830 and Lys-863. Positions 883–892 (SRSSSPTAGP) are enriched in polar residues. The segment covering 905-914 (KVKMRRKRRL) has biased composition (basic residues). The span at 915 to 933 (VNKELSKELSKELNHEIQK) shows a compositional bias: basic and acidic residues. Residues 916–944 (NKELSKELSKELNHEIQKTESTLAHESQQ) are a coiled coil. Ser-924 is subject to Phosphoserine. The segment covering 934-946 (TESTLAHESQQPI) has biased composition (polar residues). 2 positions are modified to phosphoserine: Ser-948 and Ser-952. The span at 955–968 (DEPKRPLSHCERPH) shows a compositional bias: basic and acidic residues. Phosphoserine is present on residues Ser-991 and Ser-1004. Positions 1032–1078 (DGAAHVMHREVWMAVFSYLSHRDLCVCMRVCRTWNRWCCDKRLWTRI) constitute an F-box domain. LRR repeat units lie at residues 1106–1127 (WTNISKKQLSWLINRLPGLRDL), 1129–1155 (LSGCSWIAVSALCSSSCPLLRTLDVQW), 1195–1220 (GLDITDVSLRLIIRHMPLLSKLQLSY), 1221–1250 (CNHINDQSINLLTAVGTTTRDSLTEVNLSD), 1251–1275 (CNKVTDLCLSFFKRCGNICHIDLRY), and 1276–1309 (CKQVTKEGCEQFIAEMSVSVQFGQVEEKLLQKLS).

Belongs to the JHDM1 histone demethylase family. In terms of assembly, interacts with SKP1, forming heterodimers. The KDM2B-SKP1 heterodimeric complex interacts with the PCGF1-BCORL heterodimeric complex to form a homotetrameric polycomb repression complex 1 (PRC1.1). Directly interacts with CUL1. The SKP1-KDM2B interacts with UBB. The cofactor is Fe(2+).

Its subcellular location is the nucleus. The protein localises to the nucleolus. The protein resides in the chromosome. The catalysed reaction is N(6),N(6)-dimethyl-L-lysyl(36)-[histone H3] + 2 2-oxoglutarate + 2 O2 = L-lysyl(36)-[histone H3] + 2 formaldehyde + 2 succinate + 2 CO2. With respect to regulation, histone demethylase activity is inhibited by fumarate. In terms of biological role, histone demethylase that demethylates 'Lys-4' and 'Lys-36' of histone H3, thereby playing a central role in histone code. Preferentially demethylates trimethylated H3 'Lys-4' and dimethylated H3 'Lys-36' residue while it has weak or no activity for mono- and tri-methylated H3 'Lys-36'. Preferentially binds the transcribed region of ribosomal RNA and represses the transcription of ribosomal RNA genes which inhibits cell growth and proliferation. May also serve as a substrate-recognition component of the SCF (SKP1-CUL1-F-box protein)-type E3 ubiquitin ligase complex. This Mus musculus (Mouse) protein is Lysine-specific demethylase 2B (Kdm2b).